Reading from the N-terminus, the 338-residue chain is Probable tRNA pseudouridine synthase B (338 aa).

Catalysis depends on Asp-82, which acts as the Nucleophile. Residues 250-325 (LPKVWIRDSA…IAVDVDKVFM (76 aa)) form the PUA domain.

The protein belongs to the pseudouridine synthase TruB family. Type 2 subfamily.

It catalyses the reaction uridine(55) in tRNA = pseudouridine(55) in tRNA. Functionally, could be responsible for synthesis of pseudouridine from uracil-55 in the psi GC loop of transfer RNAs. The protein is Probable tRNA pseudouridine synthase B of Thermococcus kodakarensis (strain ATCC BAA-918 / JCM 12380 / KOD1) (Pyrococcus kodakaraensis (strain KOD1)).